The primary structure comprises 118 residues: Mating-type P-specific polypeptide Pc (118 aa).

The HMG box DNA-binding region spans 29–97 (KTTIYKNGFM…VRKQIAKLER (69 aa)).

Its subcellular location is the nucleus. Its function is as follows. Mating type proteins are sequence specific DNA-binding proteins that act as master switches in yeast differentiation by controlling gene expression in a cell type-specific fashion. Required for conjugation and efficient meiosis. This Schizosaccharomyces kambucha (Fission yeast) protein is Mating-type P-specific polypeptide Pc (matPc).